Reading from the N-terminus, the 1151-residue chain is Semaphorin-5B (1151 aa).

Topologically, residues 1 to 1036 are extracellular; the sequence is MPCGFSPSPV…TDCAGFNLIH (1036 aa). The Sema domain occupies 103 to 553; it reads HPTVAFEDLQ…LRDGVLRVPL (451 aa). An N-linked (GlcNAc...) asparagine glycan is attached at Asn-153. 2 disulfides stabilise this stretch: Cys-172-Cys-182 and Cys-199-Cys-208. Asn-236 and Asn-345 each carry an N-linked (GlcNAc...) asparagine glycan. Cystine bridges form between Cys-322-Cys-425 and Cys-346-Cys-388. Asn-436 carries N-linked (GlcNAc...) asparagine glycosylation. Positions 555-602 constitute a PSI domain; it reads RCAAYRSQGACLGARDPYCGWDGKQQRCSTLEDSSNMSLWTQNITACP. TSP type-1 domains follow at residues 664–720 and 722–771; these read NGAW…TPCP and PIFW…EGCP. Cystine bridges form between Cys-676/Cys-713, Cys-680/Cys-719, Cys-691/Cys-703, Cys-734/Cys-765, Cys-738/Cys-770, and Cys-749/Cys-755. Thr-788 carries O-linked (GalNAc...) threonine glycosylation. 3 consecutive TSP type-1 domains span residues 853–908, 910–965, and 966–1010; these read SGGW…QACP, RGAW…QACP, and EGWS…RPCP. 6 cysteine pairs are disulfide-bonded: Cys-865-Cys-902, Cys-869-Cys-907, Cys-880-Cys-892, Cys-922-Cys-959, Cys-926-Cys-964, and Cys-937-Cys-949. The chain crosses the membrane as a helical; Signal-anchor for type III membrane protein span at residues 1037–1057; it reads LVATGISCFLGSGLLTLAVYL. Residues 1058-1151 lie on the Cytoplasmic side of the membrane; the sequence is SCQHCQRQSQ…SPGQRCFPNS (94 aa).

This sequence belongs to the semaphorin family.

It localises to the membrane. Functionally, may act as a positive axonal guidance cue. The chain is Semaphorin-5B (SEMA5B) from Homo sapiens (Human).